Consider the following 501-residue polypeptide: Ribose import ATP-binding protein RbsA (501 aa).

2 ABC transporter domains span residues 5-241 (LQLK…VGRK) and 252-495 (APGE…VGKL). ATP is bound at residue 37-44 (GENGAGKS).

It belongs to the ABC transporter superfamily. Ribose importer (TC 3.A.1.2.1) family. The complex is composed of an ATP-binding protein (RbsA), two transmembrane proteins (RbsC) and a solute-binding protein (RbsB).

It is found in the cell inner membrane. It catalyses the reaction D-ribose(out) + ATP + H2O = D-ribose(in) + ADP + phosphate + H(+). In terms of biological role, part of the ABC transporter complex RbsABC involved in ribose import. Responsible for energy coupling to the transport system. This chain is Ribose import ATP-binding protein RbsA, found in Salmonella paratyphi A (strain ATCC 9150 / SARB42).